A 102-amino-acid polypeptide reads, in one-letter code: ATP-dependent Clp protease adapter protein ClpS (102 aa).

It belongs to the ClpS family. In terms of assembly, binds to the N-terminal domain of the chaperone ClpA.

In terms of biological role, involved in the modulation of the specificity of the ClpAP-mediated ATP-dependent protein degradation. This Dechloromonas aromatica (strain RCB) protein is ATP-dependent Clp protease adapter protein ClpS.